The chain runs to 133 residues: NADPH-dependent 7-cyano-7-deazaguanine reductase (133 aa).

The Thioimide intermediate role is filled by cysteine 49. Aspartate 56 functions as the Proton donor in the catalytic mechanism. Substrate-binding positions include 71–73 (IEL) and 90–91 (HE).

The protein belongs to the GTP cyclohydrolase I family. QueF type 1 subfamily.

Its subcellular location is the cytoplasm. The enzyme catalyses 7-aminomethyl-7-carbaguanine + 2 NADP(+) = 7-cyano-7-deazaguanine + 2 NADPH + 3 H(+). It participates in tRNA modification; tRNA-queuosine biosynthesis. Its function is as follows. Catalyzes the NADPH-dependent reduction of 7-cyano-7-deazaguanine (preQ0) to 7-aminomethyl-7-deazaguanine (preQ1). The sequence is that of NADPH-dependent 7-cyano-7-deazaguanine reductase from Leptospira borgpetersenii serovar Hardjo-bovis (strain JB197).